A 373-amino-acid chain; its full sequence is Lipoyl synthase (373 aa).

The tract at residues 14–36 (VSNDHPSSSPLQPGVKQSGEDKI) is disordered. [4Fe-4S] cluster contacts are provided by Cys81, Cys86, Cys92, Cys107, Cys111, Cys114, and Ser323. The Radical SAM core domain occupies 93-312 (FSHGTATFMI…EEYGMALGFS (220 aa)). A disordered region spans residues 346 to 373 (PAVSSTEHRERNTIASKSASKTESIHHR). Residues 358–367 (TIASKSASKT) show a composition bias toward polar residues.

Belongs to the radical SAM superfamily. Lipoyl synthase family. [4Fe-4S] cluster is required as a cofactor.

The protein resides in the cytoplasm. It catalyses the reaction [[Fe-S] cluster scaffold protein carrying a second [4Fe-4S](2+) cluster] + N(6)-octanoyl-L-lysyl-[protein] + 2 oxidized [2Fe-2S]-[ferredoxin] + 2 S-adenosyl-L-methionine + 4 H(+) = [[Fe-S] cluster scaffold protein] + N(6)-[(R)-dihydrolipoyl]-L-lysyl-[protein] + 4 Fe(3+) + 2 hydrogen sulfide + 2 5'-deoxyadenosine + 2 L-methionine + 2 reduced [2Fe-2S]-[ferredoxin]. Its pathway is protein modification; protein lipoylation via endogenous pathway; protein N(6)-(lipoyl)lysine from octanoyl-[acyl-carrier-protein]: step 2/2. In terms of biological role, catalyzes the radical-mediated insertion of two sulfur atoms into the C-6 and C-8 positions of the octanoyl moiety bound to the lipoyl domains of lipoate-dependent enzymes, thereby converting the octanoylated domains into lipoylated derivatives. This chain is Lipoyl synthase, found in Xylella fastidiosa (strain M23).